The primary structure comprises 319 residues: Ubiquinone biosynthesis protein COQ9, mitochondrial (319 aa).

Residues 1–45 (MAATVAFSGVLRRAGWRLLQLRCLPVPRCRPALAPRAFRASAMQL) constitute a mitochondrion transit peptide. An SIFI-degron motif is present at residues 17 to 32 (RLLQLRCLPVPRCRPA). Positions 46–99 (RSLDQQKDQPPPSSSQQQSEAQGAEEPNPEALRSPPRYTDQGGEEEEDYESEEQ) are disordered. Over residues 87-98 (GGEEEEDYESEE) the composition is skewed to acidic residues. Lys-176 bears the N6-acetyllysine mark. Residue Arg-245 coordinates a 1,2-diacylglycero-3-phosphoethanolamine.

Belongs to the COQ9 family. In terms of assembly, homodimer. Heterodimer; two heterodimers of COQ7:COQ9 come together on the same side of the lipid pseudo-bilayer and form a curved tetramer with a hydrophobic surface suitable for membrane interaction. These two tetramers assemble into a soluble octamer with a pseudo-bilayer of lipids captured within. Interacts with COQ7; this interaction allows ubiquinone (CoQ) isoprene intermediates presentation to COQ7 and facilitates the COQ7-mediated hydroxylase step. In response to mitochondrial stress, the precursor protein is ubiquitinated by the SIFI complex in the cytoplasm before mitochondrial import, leading to its degradation. Within the SIFI complex, UBR4 initiates ubiquitin chain that are further elongated or branched by KCMF1.

The protein localises to the mitochondrion. Its pathway is cofactor biosynthesis; ubiquinone biosynthesis. Membrane-associated protein that warps the membrane surface to access and bind aromatic isoprenes with high specificity, including ubiquinone (CoQ) isoprene intermediates and presents them directly to COQ7, therefore facilitating the COQ7-mediated hydroxylase step. Participates in the biosynthesis of coenzyme Q, also named ubiquinone, an essential lipid-soluble electron transporter for aerobic cellular respiration. The sequence is that of Ubiquinone biosynthesis protein COQ9, mitochondrial from Bos taurus (Bovine).